A 511-amino-acid chain; its full sequence is Glucose-6-phosphate 1-dehydrogenase (511 aa).

NADP(+)-binding positions include 29–36, arginine 63, and lysine 164; that span reads GASGDLAK. Residues lysine 164, 194–198, glutamate 232, and aspartate 251 contribute to the D-glucose 6-phosphate site; that span reads HYLGK. Catalysis depends on histidine 256, which acts as the Proton acceptor. Lysine 347 contributes to the NADP(+) binding site. Lysine 350 is a binding site for D-glucose 6-phosphate. Residues lysine 356, arginine 360, and arginine 382 each contribute to the NADP(+) site. D-glucose 6-phosphate is bound at residue glutamine 384. NADP(+) is bound by residues 390 to 392, 410 to 412, and arginine 477; these read YIK and DLT.

It belongs to the glucose-6-phosphate dehydrogenase family.

It catalyses the reaction D-glucose 6-phosphate + NADP(+) = 6-phospho-D-glucono-1,5-lactone + NADPH + H(+). The protein operates within carbohydrate degradation; pentose phosphate pathway; D-ribulose 5-phosphate from D-glucose 6-phosphate (oxidative stage): step 1/3. In terms of biological role, catalyzes the rate-limiting step of the oxidative pentose-phosphate pathway, which represents a route for the dissimilation of carbohydrates besides glycolysis. The main function of this enzyme is to provide reducing power (NADPH) and pentose phosphates for fatty acid and nucleic acid synthesis. The chain is Glucose-6-phosphate 1-dehydrogenase (gsdA) from Emericella nidulans (strain FGSC A4 / ATCC 38163 / CBS 112.46 / NRRL 194 / M139) (Aspergillus nidulans).